The primary structure comprises 103 residues: MYAVVKTGGKQYKVAAGEKLKVEQIPADVGAEITLDQVLAVGAGDQLKVGAPLVSGAAVKATVISHGRHDKVHIFKMRRRKHYQKRQGHRQNYTELRIDSIVA.

This sequence belongs to the bacterial ribosomal protein bL21 family. Part of the 50S ribosomal subunit. Contacts protein L20.

Its function is as follows. This protein binds to 23S rRNA in the presence of protein L20. This Ralstonia pickettii (strain 12J) protein is Large ribosomal subunit protein bL21.